The primary structure comprises 292 residues: Forkhead box protein R1 (292 aa).

Disordered regions lie at residues 31–50 (PPKL…PDYE) and 65–166 (PGKL…ASSQ). Composition is skewed to basic and acidic residues over residues 35–47 (PLEK…KDGP) and 70–79 (VSGRRKREDL). A compositionally biased stretch (polar residues) spans 80–89 (TSTLPSSQPP). Residues 129 to 140 (LTEEEEAEDQED) are compositionally biased toward acidic residues. Residues 149 to 161 (PHKRAPLQSRRLR) are compositionally biased toward basic residues. Residues 173–272 (RPPLNYFHLI…EEARALASTR (100 aa)) constitute a DNA-binding region (fork-head).

In terms of tissue distribution, expressed in testis (at protein level).

The protein localises to the nucleus. Its subcellular location is the cytoplasm. It localises to the perinuclear region. Transcription factor which acts as both an activator and a repressor. Activates transcription of a number of genes including the heat shock chaperones HSPA1A and HSPA6 and the antioxidant NADPH-dependent reductase DHRS2 which are involved in protection against oxidative stress. Required for normal brain development. In Homo sapiens (Human), this protein is Forkhead box protein R1 (FOXR1).